Reading from the N-terminus, the 363-residue chain is Adenosine 3'-phospho 5'-phosphosulfate transporter 2 (363 aa).

A run of 10 helical transmembrane segments spans residues 39–59 (WLQF…YGYM), 63–83 (IFKL…QFVI), 106–126 (IYGV…ASVG), 131–151 (PTQV…GILI), 157–177 (GWID…FTLA), 187–206 (SRGY…IGNI), 231–251 (VFIF…PFFL), 257–277 (TFGY…VVLT), 281–301 (VFGA…TIIL), and 310–330 (FTIE…LNLY).

The protein belongs to the nucleotide-sugar transporter family. SLC35B subfamily.

The protein resides in the golgi apparatus membrane. Its function is as follows. Mediates the transport of adenosine 3'-phospho 5'-phosphosulfate (PAPS), from cytosol into Golgi. PAPS is a universal sulfuryl donor for sulfation events that take place in the Golgi. The polypeptide is Adenosine 3'-phospho 5'-phosphosulfate transporter 2 (pst-2) (Caenorhabditis briggsae).